We begin with the raw amino-acid sequence, 228 residues long: uncharacterized protein (228 aa).

A coiled-coil region spans residues 196-228 (VKITELLDKAKISINDLNKTIEKLNETVNKYHG).

This is an uncharacterized protein from Acanthamoeba polyphaga (Amoeba).